Reading from the N-terminus, the 148-residue chain is Endothelial differentiation-related factor 1 (148 aa).

An N-acetylalanine modification is found at A2. Residue S4 is modified to Phosphoserine. Position 25 is an N6-methyllysine (K25). The span at 33 to 42 (RRGEDVETSK) shows a compositional bias: basic and acidic residues. The tract at residues 33–66 (RRGEDVETSKKWAAGQNKQHSITKNTAKLDRETE) is disordered. The tract at residues 37-113 (DVETSKKWAA…QVIADYESGR (77 aa)) is interaction with NR5A2, PPARG and NR1H3. Residues 48–58 (QNKQHSITKNT) are compositionally biased toward polar residues. Residues 69–108 (HHDRVTLEVGKVIQQGRQSKGLTQKDLATKINEKPQVIAD) form an interaction with TBP and NR5A1 region. Positions 81 to 88 (IQQGRQSK) match the IQ motif motif. Residues 81–135 (IQQGRQSKGLTQKDLATKINEKPQVIADYESGRAIPNNQVLGKIERAIGLKLRGK) enclose the HTH cro/C1-type domain. A DNA-binding region (H-T-H motif) is located at residues 92–111 (QKDLATKINEKPQVIADYES).

Interacts with TBP and the transcription factor IID (TFIID) complex, NR5A2, NR1H3 and PPARG. Interaction with TBP is regulated by phosphorylation. Binds NR5A1, ATF1, FOS and JUN via their conserved basic region. Binding to calmodulin is regulated by calcium and phosphorylation of the IQ motif. In terms of processing, phosphorylated (by PKA and PKC). In terms of tissue distribution, expressed in brain, liver, lung, kidney and heart (at protein level). Ubiquitously expressed. More abundant in heart, pancreas, liver, intestine and adipose tissues.

The protein resides in the cytoplasm. It is found in the nucleus. Transcriptional coactivator stimulating NR5A1 and ligand-dependent NR1H3/LXRA and PPARG transcriptional activities. Enhances the DNA-binding activity of ATF1, ATF2, CREB1 and NR5A1. Regulates nitric oxid synthase activity probably by sequestering calmodulin in the cytoplasm. May function in endothelial cells differentiation, hormone-induced cardiomyocytes hypertrophy and lipid metabolism. The protein is Endothelial differentiation-related factor 1 (EDF1) of Homo sapiens (Human).